Reading from the N-terminus, the 319-residue chain is MSGMQISSYLRKYLADEDKKIREEFKESDPNNEMILWMHEKTRITEEDLARPYTEDEVRELCLRTKVKVNMTAWNCLWEAKKRFDAKGRFERKSEEFINLMYLKAVRRKMVQPYPEDYVAQRREIAAAETKKDNISRLDRWQKQKRRNQSAHATQPDSQDNEVVEIHDDTNRYSVSQAVALPVLTPSDLSGIGDDEDEQQQQHHHHKHRSGFQNEHADCPETQMRCDQADSGRLPNGPTNSESDPDYYMFGTQLSRSIQPTSTQEADDQLACPETEMNESWVRCDQINSESMSIGPSINSDGSISFQNSGSEPIDVDVN.

The interval R107–E312 is required for binding to Su(var)205. 2 disordered regions span residues W141–V163 and P186–Y248. 2 short sequence motifs (su(var)205-binding Pro-containing repeat) span residues P220–M224 and P273–E279. A compositionally biased stretch (polar residues) spans S291 to S311. A disordered region spans residues S291 to N319.

Interacts (via C-terminus) with Su(var)205 dimer (via hinge and chromoshadow domain) and with moi to form the terminin, telomere-capping, complex. Interacts with HP6, which is also part of the terminin complex.

It localises to the nucleus. Its subcellular location is the chromosome. The protein localises to the telomere. Its function is as follows. Binds to chromosome ends in a sequence-dependent manner and is required for telomere capping. The polypeptide is Telomere-binding protein cav (Drosophila yakuba (Fruit fly)).